Here is a 367-residue protein sequence, read N- to C-terminus: tRNA-specific 2-thiouridylase MnmA (367 aa).

ATP contacts are provided by residues 11–18 (AMSGGVDS) and Met37. Residues 97 to 99 (NPD) are interaction with target base in tRNA. Cys102 functions as the Nucleophile in the catalytic mechanism. An intrachain disulfide couples Cys102 to Cys199. Gly127 provides a ligand contact to ATP. The segment at 149-151 (KDQ) is interaction with tRNA. The active-site Cysteine persulfide intermediate is the Cys199. Positions 311-312 (RY) are interaction with tRNA.

Belongs to the MnmA/TRMU family. As to quaternary structure, interacts with TusE.

It is found in the cytoplasm. It carries out the reaction S-sulfanyl-L-cysteinyl-[protein] + uridine(34) in tRNA + AH2 + ATP = 2-thiouridine(34) in tRNA + L-cysteinyl-[protein] + A + AMP + diphosphate + H(+). Catalyzes the 2-thiolation of uridine at the wobble position (U34) of tRNA(Lys), tRNA(Glu) and tRNA(Gln), leading to the formation of s(2)U34, the first step of tRNA-mnm(5)s(2)U34 synthesis. Sulfur is provided by IscS, via a sulfur-relay system. Binds ATP and its substrate tRNAs. The protein is tRNA-specific 2-thiouridylase MnmA of Buchnera aphidicola subsp. Schizaphis graminum (strain Sg).